Consider the following 360-residue polypeptide: Methyltransferase pvhD (360 aa).

Residues 201-202 (SG), D227, 251-252 (DL), R267, and R268 each bind S-adenosyl-L-methionine.

It belongs to the class I-like SAM-binding methyltransferase superfamily. Cation-independent O-methyltransferase family.

Its pathway is secondary metabolite biosynthesis. In terms of biological role, methyltransferase; part of the gene cluster that mediates the biosynthesis of varicidin A, an antifungal natural product containing a cis-octahydrodecalin core. The PKS module of pvhA together with the enoylreductase pvhC catalyze the formation of the polyketide unit which is then conjugated to L-isoleucine by the condensation domain of the NRPS module. Activity of the Dieckmann cyclase domain (RED) of pvhA results in release of an acyclic tetramate. The cytochrome P450 monooxygenase pvhE then catalyzes the oxidation of the C21 methyl group to a to carboxylate group. The methyltransferase pvhD then further methylates the pvhE product. The Diels-Alderase pvhB is able to catalyze Diels-Alder cycloaddition using both pvhE and pvhD products as substrates to form the decalin ring, yielding varicidin B and A, respectively. This Talaromyces variabilis (Penicillium variabile) protein is Methyltransferase pvhD.